The following is a 284-amino-acid chain: Tropomyosin (284 aa).

Residues 1–273 adopt a coiled-coil conformation; that stretch reads MDAIKKKMVA…KEKYKAISDE (273 aa). A compositionally biased stretch (basic and acidic residues) spans 110 to 130; it reads SGKLEEASKAADESERNRKVL. The tract at residues 110-134 is disordered; the sequence is SGKLEEASKAADESERNRKVLENLN.

The protein belongs to the tropomyosin family. In terms of assembly, homodimer.

Its function is as follows. Tropomyosin, in association with the troponin complex, plays a central role in the calcium dependent regulation of muscle contraction. The chain is Tropomyosin from Perna viridis (Asian green mussel).